The sequence spans 52 residues: MGFWRIVITIILPPLGVLLGKGFGWAFIINILLTLLGYIPGLIHAFWVQTRD.

The next 2 helical transmembrane spans lie at 1–21 (MGFW…LLGK) and 23–43 (FGWA…PGLI).

Belongs to the UPF0057 (PMP3) family.

It is found in the cell membrane. The polypeptide is UPF0057 membrane protein YqaE (yqaE) (Escherichia coli O157:H7).